Reading from the N-terminus, the 121-residue chain is Ribosome-binding factor A (121 aa).

Belongs to the RbfA family. In terms of assembly, monomer. Binds 30S ribosomal subunits, but not 50S ribosomal subunits or 70S ribosomes.

Its subcellular location is the cytoplasm. In terms of biological role, one of several proteins that assist in the late maturation steps of the functional core of the 30S ribosomal subunit. Associates with free 30S ribosomal subunits (but not with 30S subunits that are part of 70S ribosomes or polysomes). Required for efficient processing of 16S rRNA. May interact with the 5'-terminal helix region of 16S rRNA. In Agathobacter rectalis (strain ATCC 33656 / DSM 3377 / JCM 17463 / KCTC 5835 / VPI 0990) (Eubacterium rectale), this protein is Ribosome-binding factor A.